The sequence spans 258 residues: Thiazole synthase (258 aa).

K100 functions as the Schiff-base intermediate with DXP in the catalytic mechanism. Residues G161, 187-188 (AG), and 209-210 (NT) each bind 1-deoxy-D-xylulose 5-phosphate.

It belongs to the ThiG family. Homotetramer. Forms heterodimers with either ThiH or ThiS.

It is found in the cytoplasm. It catalyses the reaction [ThiS sulfur-carrier protein]-C-terminal-Gly-aminoethanethioate + 2-iminoacetate + 1-deoxy-D-xylulose 5-phosphate = [ThiS sulfur-carrier protein]-C-terminal Gly-Gly + 2-[(2R,5Z)-2-carboxy-4-methylthiazol-5(2H)-ylidene]ethyl phosphate + 2 H2O + H(+). It functions in the pathway cofactor biosynthesis; thiamine diphosphate biosynthesis. Its function is as follows. Catalyzes the rearrangement of 1-deoxy-D-xylulose 5-phosphate (DXP) to produce the thiazole phosphate moiety of thiamine. Sulfur is provided by the thiocarboxylate moiety of the carrier protein ThiS. In vitro, sulfur can be provided by H(2)S. In Campylobacter jejuni subsp. jejuni serotype O:2 (strain ATCC 700819 / NCTC 11168), this protein is Thiazole synthase.